The sequence spans 455 residues: Bifunctional protein GlmU (455 aa).

Residues 1 to 227 form a pyrophosphorylase region; the sequence is MLTDIVILAA…ATEALGVNDP (227 aa). Residues 8–11, Lys-22, Gln-73, 78–79, 100–102, Gly-137, Glu-152, Asn-167, and Asn-225 contribute to the UDP-N-acetyl-alpha-D-glucosamine site; these read LAAG, GT, and YGD. Mg(2+) is bound at residue Asp-102. Mg(2+) is bound at residue Asn-225. The segment at 228–248 is linker; it reads VQLAILERVFQRQQLRALQMQ. An N-acetyltransferase region spans residues 249-455; it reads GLRVADPARV…HWQRPRRDKK (207 aa). The UDP-N-acetyl-alpha-D-glucosamine site is built by Arg-331 and Lys-349. Catalysis depends on His-361, which acts as the Proton acceptor. UDP-N-acetyl-alpha-D-glucosamine-binding residues include Tyr-364 and Asn-375. Acetyl-CoA is bound by residues Ala-378, 384-385, Ser-403, Ala-421, and Arg-438; that span reads NY. The interval 420–455 is disordered; that stretch reads GAGSTITKEVPPGGLTLSRSPQRTIPHWQRPRRDKK.

The protein in the N-terminal section; belongs to the N-acetylglucosamine-1-phosphate uridyltransferase family. This sequence in the C-terminal section; belongs to the transferase hexapeptide repeat family. Homotrimer. Mg(2+) is required as a cofactor.

The protein localises to the cytoplasm. The catalysed reaction is alpha-D-glucosamine 1-phosphate + acetyl-CoA = N-acetyl-alpha-D-glucosamine 1-phosphate + CoA + H(+). The enzyme catalyses N-acetyl-alpha-D-glucosamine 1-phosphate + UTP + H(+) = UDP-N-acetyl-alpha-D-glucosamine + diphosphate. The protein operates within nucleotide-sugar biosynthesis; UDP-N-acetyl-alpha-D-glucosamine biosynthesis; N-acetyl-alpha-D-glucosamine 1-phosphate from alpha-D-glucosamine 6-phosphate (route II): step 2/2. Its pathway is nucleotide-sugar biosynthesis; UDP-N-acetyl-alpha-D-glucosamine biosynthesis; UDP-N-acetyl-alpha-D-glucosamine from N-acetyl-alpha-D-glucosamine 1-phosphate: step 1/1. It participates in bacterial outer membrane biogenesis; LPS lipid A biosynthesis. Its function is as follows. Catalyzes the last two sequential reactions in the de novo biosynthetic pathway for UDP-N-acetylglucosamine (UDP-GlcNAc). The C-terminal domain catalyzes the transfer of acetyl group from acetyl coenzyme A to glucosamine-1-phosphate (GlcN-1-P) to produce N-acetylglucosamine-1-phosphate (GlcNAc-1-P), which is converted into UDP-GlcNAc by the transfer of uridine 5-monophosphate (from uridine 5-triphosphate), a reaction catalyzed by the N-terminal domain. In Acidithiobacillus ferrooxidans (strain ATCC 23270 / DSM 14882 / CIP 104768 / NCIMB 8455) (Ferrobacillus ferrooxidans (strain ATCC 23270)), this protein is Bifunctional protein GlmU.